Here is a 338-residue protein sequence, read N- to C-terminus: Methionine import ATP-binding protein MetN 1 (338 aa).

One can recognise an ABC transporter domain in the interval 2-241 (IELHQVSKSF…AKHATTKRFV (240 aa)). Residue 38 to 45 (GYSGAGKS) coordinates ATP.

The protein belongs to the ABC transporter superfamily. Methionine importer (TC 3.A.1.24) family. In terms of assembly, the complex is composed of two ATP-binding proteins (MetN), two transmembrane proteins (MetI) and a solute-binding protein (MetQ).

Its subcellular location is the cell membrane. The enzyme catalyses L-methionine(out) + ATP + H2O = L-methionine(in) + ADP + phosphate + H(+). It carries out the reaction D-methionine(out) + ATP + H2O = D-methionine(in) + ADP + phosphate + H(+). In terms of biological role, part of the ABC transporter complex MetNIQ involved in methionine import. Responsible for energy coupling to the transport system. The sequence is that of Methionine import ATP-binding protein MetN 1 from Listeria monocytogenes serovar 1/2a (strain ATCC BAA-679 / EGD-e).